A 531-amino-acid polypeptide reads, in one-letter code: Probable rhamnogalacturonate lyase A (531 aa).

Positions 1–20 (MLSKTSLLSLLSLAAGVVNA) are cleaved as a signal peptide. Disulfide bonds link Cys-50–Cys-93 and Cys-184–Cys-193.

It belongs to the polysaccharide lyase 4 family.

The protein resides in the secreted. The enzyme catalyses Endotype eliminative cleavage of L-alpha-rhamnopyranosyl-(1-&gt;4)-alpha-D-galactopyranosyluronic acid bonds of rhamnogalacturonan I domains in ramified hairy regions of pectin leaving L-rhamnopyranose at the reducing end and 4-deoxy-4,5-unsaturated D-galactopyranosyluronic acid at the non-reducing end.. Pectinolytic enzymes consist of four classes of enzymes: pectin lyase, polygalacturonase, pectin methylesterase and rhamnogalacturonase. Degrades the rhamnogalacturonan I (RG-I) backbone of pectin. This is Probable rhamnogalacturonate lyase A (rglA) from Aspergillus niger (strain ATCC MYA-4892 / CBS 513.88 / FGSC A1513).